We begin with the raw amino-acid sequence, 185 residues long: Elongation factor P (185 aa).

The protein belongs to the elongation factor P family.

It localises to the cytoplasm. The protein operates within protein biosynthesis; polypeptide chain elongation. In terms of biological role, involved in peptide bond synthesis. Stimulates efficient translation and peptide-bond synthesis on native or reconstituted 70S ribosomes in vitro. Probably functions indirectly by altering the affinity of the ribosome for aminoacyl-tRNA, thus increasing their reactivity as acceptors for peptidyl transferase. The chain is Elongation factor P (efp) from Thermotoga maritima (strain ATCC 43589 / DSM 3109 / JCM 10099 / NBRC 100826 / MSB8).